A 556-amino-acid polypeptide reads, in one-letter code: Zinc finger protein 18 (556 aa).

One can recognise an SCAN box domain in the interval 41–123 (RQLFRQFRYQ…TLVESLKGDP (83 aa)). The tract at residues 169–195 (QDLPLQNTSSAPGELLSHGVKEESDLE) is disordered. Positions 218–291 (EVGTALLPSL…HLHSAEKMAR (74 aa)) constitute a KRAB domain. 5 C2H2-type zinc fingers span residues 415-437 (PTCRECGKTFYRNSQLVFHQRTH), 443-465 (FHCRICKKAFLRSSDFVKHQRTH), 471-493 (CKCDYCGKGFSDFSGLRHHEKIH), 499-521 (YKCPICEKSFIQRSNFNRHQRVH), and 527-549 (YKCTHCGKRFSWSSSLDKHQRSH).

It belongs to the krueppel C2H2-type zinc-finger protein family.

The protein resides in the nucleus. Functionally, may be involved in transcriptional regulation. This is Zinc finger protein 18 (Znf18) from Rattus norvegicus (Rat).